We begin with the raw amino-acid sequence, 54 residues long: UPF0391 membrane protein pRL90066 (54 aa).

2 helical membrane-spanning segments follow: residues 5-25 and 28-48; these read ALVF…GIAG and ASIA…SLVM.

Belongs to the UPF0391 family.

It localises to the cell membrane. The polypeptide is UPF0391 membrane protein pRL90066 (Rhizobium johnstonii (strain DSM 114642 / LMG 32736 / 3841) (Rhizobium leguminosarum bv. viciae)).